Consider the following 207-residue polypeptide: Cytochrome c biogenesis ATP-binding export protein CcmA (207 aa).

In terms of domain architecture, ABC transporter spans 4–207; the sequence is LEARELLCER…RISLTQTRAA (204 aa). 36–43 serves as a coordination point for ATP; the sequence is GSNGAGKT.

It belongs to the ABC transporter superfamily. CcmA exporter (TC 3.A.1.107) family. The complex is composed of two ATP-binding proteins (CcmA) and two transmembrane proteins (CcmB).

It localises to the cell inner membrane. The enzyme catalyses heme b(in) + ATP + H2O = heme b(out) + ADP + phosphate + H(+). Its function is as follows. Part of the ABC transporter complex CcmAB involved in the biogenesis of c-type cytochromes; once thought to export heme, this seems not to be the case, but its exact role is uncertain. Responsible for energy coupling to the transport system. This chain is Cytochrome c biogenesis ATP-binding export protein CcmA, found in Shigella boydii serotype 4 (strain Sb227).